The sequence spans 101 residues: MENNNFRDSVLAILVCQFIGPNVFIIIGSIGSVIGVKIMEMYPHYCENHGIYIDKTSVGIAHGIYGIILGFIGIYVFLFVLLFILSIIFSIIYVISKRLSS.

Helical transmembrane passes span 10–30 and 67–87; these read VLAILVCQFIGPNVFIIIGSI and IILGFIGIYVFLFVLLFILSI.

Its subcellular location is the membrane. This is an uncharacterized protein from Acanthamoeba polyphaga (Amoeba).